The chain runs to 329 residues: tRNA-modifying protein YgfZ (329 aa).

Folate contacts are provided by Trp27 and Trp189.

This sequence belongs to the tRNA-modifying YgfZ family.

Its subcellular location is the cytoplasm. Functionally, folate-binding protein involved in regulating the level of ATP-DnaA and in the modification of some tRNAs. It is probably a key factor in regulatory networks that act via tRNA modification, such as initiation of chromosomal replication. This chain is tRNA-modifying protein YgfZ, found in Cronobacter sakazakii (strain ATCC BAA-894) (Enterobacter sakazakii).